A 303-amino-acid polypeptide reads, in one-letter code: Probable 5-dehydro-4-deoxyglucarate dehydratase (303 aa).

This sequence belongs to the DapA family.

It catalyses the reaction 5-dehydro-4-deoxy-D-glucarate + H(+) = 2,5-dioxopentanoate + CO2 + H2O. Its pathway is carbohydrate acid metabolism; D-glucarate degradation; 2,5-dioxopentanoate from D-glucarate: step 2/2. In Acinetobacter baylyi (strain ATCC 33305 / BD413 / ADP1), this protein is Probable 5-dehydro-4-deoxyglucarate dehydratase.